The primary structure comprises 170 residues: MVDTTKNTKLFTSYGVSTSKTVAPEMAAKLISKAKRPLLMVGTLALDPEILDRVVKISKTANIPIAATGSSLAALADKDVDAKYINAHMLGFYLTDPNWPGLDGNGNYDMVISIGFKKFYINQVLSAAKNFSNVKAIAIERGYIQNATMSFGNLSKAEHYAALDELVDFL.

The protein belongs to the CdhB family. In terms of assembly, heterotetramer of two alpha and two epsilon subunits. The ACDS complex is made up of alpha, epsilon, beta, gamma and delta subunits with a probable stoichiometry of (alpha(2)epsilon(2))(4)-beta(8)-(gamma(1)delta(1))(8).

The protein operates within one-carbon metabolism; methanogenesis from acetate. Part of a complex that catalyzes the reversible cleavage of acetyl-CoA, allowing growth on acetate as sole source of carbon and energy. The alpha-epsilon subcomponent functions as a carbon monoxide dehydrogenase. The precise role of the epsilon subunit is unclear; it may have a stabilizing role within the alpha(2)epsilon(2) component and/or be involved in electron transfer to FAD during a potential FAD-mediated CO oxidation. This Methanosarcina mazei (strain ATCC BAA-159 / DSM 3647 / Goe1 / Go1 / JCM 11833 / OCM 88) (Methanosarcina frisia) protein is Acetyl-CoA decarbonylase/synthase complex subunit epsilon 2 (cdhB2).